The chain runs to 341 residues: S-adenosylmethionine:tRNA ribosyltransferase-isomerase (341 aa).

This sequence belongs to the QueA family. As to quaternary structure, monomer.

The protein resides in the cytoplasm. The catalysed reaction is 7-aminomethyl-7-carbaguanosine(34) in tRNA + S-adenosyl-L-methionine = epoxyqueuosine(34) in tRNA + adenine + L-methionine + 2 H(+). Its pathway is tRNA modification; tRNA-queuosine biosynthesis. Its function is as follows. Transfers and isomerizes the ribose moiety from AdoMet to the 7-aminomethyl group of 7-deazaguanine (preQ1-tRNA) to give epoxyqueuosine (oQ-tRNA). The polypeptide is S-adenosylmethionine:tRNA ribosyltransferase-isomerase (Staphylococcus saprophyticus subsp. saprophyticus (strain ATCC 15305 / DSM 20229 / NCIMB 8711 / NCTC 7292 / S-41)).